Reading from the N-terminus, the 346-residue chain is MVSSNFYKNLGPRKLTAIIDFLHDIIAPPKIHEDIAIHDIKILQEASPNDISFLSNPKYSEFLKTTKAAACIVPKNFTGEANPNTVLLHAQNSYFAYSKLIDFFYAPIKSYPTKIMKSAIVADSATIGKNCYIGHNVVIEDDVIIGDNSIIEAGSFIGRGVNIGRNARIEQHVSINYAIIGDDVVILAGAKIGQDGFGFSTEKGVHHKIFHIGIVKIGNNVEIGANTTIDRGSLQDTIIKDLCRIDNLVQIGHGVKIGKGSIIVAQTGIAGSSTIGKYCALGGQVGIAGHLNIGDGAQVAAQGGVAQNIEAGKIVGGSPAIPIMDWHRQSIIMKQLLKTSNSKLKK.

The active-site Proton acceptor is H253.

This sequence belongs to the transferase hexapeptide repeat family. LpxD subfamily. As to quaternary structure, homotrimer.

The enzyme catalyses a UDP-3-O-[(3R)-3-hydroxyacyl]-alpha-D-glucosamine + a (3R)-hydroxyacyl-[ACP] = a UDP-2-N,3-O-bis[(3R)-3-hydroxyacyl]-alpha-D-glucosamine + holo-[ACP] + H(+). It participates in bacterial outer membrane biogenesis; LPS lipid A biosynthesis. In terms of biological role, catalyzes the N-acylation of UDP-3-O-acylglucosamine using 3-hydroxyacyl-ACP as the acyl donor. Is involved in the biosynthesis of lipid A, a phosphorylated glycolipid that anchors the lipopolysaccharide to the outer membrane of the cell. The polypeptide is UDP-3-O-acylglucosamine N-acyltransferase (Rickettsia peacockii (strain Rustic)).